A 1862-amino-acid chain; its full sequence is Chitin synthase V (1862 aa).

Positions 1–26 are disordered; that stretch reads MAMSLPQLGGAGGPHTQPSLPSLPAH. The region spanning 1-778 is the Myosin motor domain; it reads MAMSLPQLGG…CWMEIAQLGE (778 aa). N-linked (GlcNAc...) asparagine glycosylation is present at N63. Residue 104 to 111 participates in ATP binding; sequence GESGAGKS. 5 N-linked (GlcNAc...) asparagine glycosylation sites follow: N123, N429, N483, N522, and N560. The segment at 592–643 is disordered; that stretch reads TVSSKPMRAPSVMSRKTHRTGRPSTAYKRQQQEAMEELDQQSQAGESKKNAK. Residues 658–682 form an actin-binding region; it reads LDNVQKAVTDPGTNSYFVFCLKPND. A run of 2 helical transmembrane segments spans residues 884–904 and 923–943; these read WVAL…RLIG and MLIW…PMLI. In terms of domain architecture, Cytochrome b5 heme-binding spans 947–1009; sequence QYVYSSNELS…YAGKDISALF (63 aa). 3 N-linked (GlcNAc...) asparagine glycosylation sites follow: N1036, N1063, and N1192. Residues 1202 to 1222 form a helical membrane-spanning segment; the sequence is FILAISVMLASILVFKFLAAL. N1459 and N1565 each carry an N-linked (GlcNAc...) asparagine glycan. Helical transmembrane passes span 1590-1610, 1623-1643, and 1650-1670; these read FVVF…MYIV, VPIT…VIFI, and MVGW…GLPL. N-linked (GlcNAc...) asparagine glycosylation is present at N1771. Residues 1804–1859 enclose the DEK-C domain; it reads MPSDDALLAEIRDILKTADLMTVTKKGIKQELERRFNVPLDAKRAYINSATEALLS.

In the N-terminal section; belongs to the TRAFAC class myosin-kinesin ATPase superfamily. Myosin family. This sequence in the C-terminal section; belongs to the chitin synthase family. Class V subfamily.

The protein resides in the cell membrane. It carries out the reaction [(1-&gt;4)-N-acetyl-beta-D-glucosaminyl](n) + UDP-N-acetyl-alpha-D-glucosamine = [(1-&gt;4)-N-acetyl-beta-D-glucosaminyl](n+1) + UDP + H(+). Polymerizes chitin, a structural polymer of the cell wall and septum, by transferring the sugar moiety of UDP-GlcNAc to the non-reducing end of the growing chitin polymer. ChsV and chsVb do perform additive, but not redundant, functions in septum formation. Involved in cell wall integrity and resistance to antimicrobial plant defense compounds such as the tomato phytoanticipin alpha-tomatine or H(2)O(2), and plays a crucial role in vascular colonization and pathogenicity. Also plays an important role in nuclear sorting or distribution. The protein is Chitin synthase V of Fusarium oxysporum f. sp. lycopersici (strain 4287 / CBS 123668 / FGSC 9935 / NRRL 34936) (Fusarium vascular wilt of tomato).